Consider the following 401-residue polypeptide: Enolase (401 aa).

Gln154 contributes to the (2R)-2-phosphoglycerate binding site. The Proton donor role is filled by Glu196. Positions 232, 275, and 302 each coordinate Mg(2+). Lys327, Arg356, Ser357, and Lys378 together coordinate (2R)-2-phosphoglycerate. Lys327 (proton acceptor) is an active-site residue.

This sequence belongs to the enolase family. Mg(2+) is required as a cofactor.

Its subcellular location is the cytoplasm. The protein resides in the secreted. It is found in the cell surface. The enzyme catalyses (2R)-2-phosphoglycerate = phosphoenolpyruvate + H2O. Its pathway is carbohydrate degradation; glycolysis; pyruvate from D-glyceraldehyde 3-phosphate: step 4/5. Functionally, catalyzes the reversible conversion of 2-phosphoglycerate (2-PG) into phosphoenolpyruvate (PEP). It is essential for the degradation of carbohydrates via glycolysis. The protein is Enolase of Haloquadratum walsbyi (strain DSM 16790 / HBSQ001).